The chain runs to 425 residues: Enolase (425 aa).

Glutamine 163 provides a ligand contact to (2R)-2-phosphoglycerate. The Proton donor role is filled by glutamate 205. Mg(2+) is bound by residues aspartate 242, glutamate 285, and aspartate 312. Residues lysine 337, arginine 366, serine 367, and lysine 388 each contribute to the (2R)-2-phosphoglycerate site. Catalysis depends on lysine 337, which acts as the Proton acceptor.

Belongs to the enolase family. Requires Mg(2+) as cofactor.

The protein resides in the cytoplasm. The protein localises to the secreted. Its subcellular location is the cell surface. It carries out the reaction (2R)-2-phosphoglycerate = phosphoenolpyruvate + H2O. It participates in carbohydrate degradation; glycolysis; pyruvate from D-glyceraldehyde 3-phosphate: step 4/5. Its function is as follows. Catalyzes the reversible conversion of 2-phosphoglycerate (2-PG) into phosphoenolpyruvate (PEP). It is essential for the degradation of carbohydrates via glycolysis. This Ruegeria sp. (strain TM1040) (Silicibacter sp.) protein is Enolase.